The sequence spans 311 residues: tRNA dimethylallyltransferase (311 aa).

Residue 13–20 coordinates ATP; sequence GPTASGKT. 15 to 20 is a substrate binding site; sequence TASGKT. Interaction with substrate tRNA regions lie at residues 38–41 and 166–170; these read DSMQ and QRGLR.

This sequence belongs to the IPP transferase family. In terms of assembly, monomer. Mg(2+) is required as a cofactor.

It catalyses the reaction adenosine(37) in tRNA + dimethylallyl diphosphate = N(6)-dimethylallyladenosine(37) in tRNA + diphosphate. In terms of biological role, catalyzes the transfer of a dimethylallyl group onto the adenine at position 37 in tRNAs that read codons beginning with uridine, leading to the formation of N6-(dimethylallyl)adenosine (i(6)A). The protein is tRNA dimethylallyltransferase of Staphylococcus aureus (strain MSSA476).